Consider the following 297-residue polypeptide: Light-independent protochlorophyllide reductase iron-sulfur ATP-binding protein (297 aa).

Residues 41–46 and Lys70 contribute to the ATP site; that span reads GIGKST. Mg(2+) is bound at residue Ser45. Positions 126 and 160 each coordinate [4Fe-4S] cluster. ATP contacts are provided by residues 211-212 and 235-237; these read NR and PDL.

This sequence belongs to the NifH/BchL/ChlL family. As to quaternary structure, homodimer. Protochlorophyllide reductase is composed of three subunits; BchL, BchN and BchB. It depends on [4Fe-4S] cluster as a cofactor.

It catalyses the reaction chlorophyllide a + oxidized 2[4Fe-4S]-[ferredoxin] + 2 ADP + 2 phosphate = protochlorophyllide a + reduced 2[4Fe-4S]-[ferredoxin] + 2 ATP + 2 H2O. Its pathway is porphyrin-containing compound metabolism; bacteriochlorophyll biosynthesis (light-independent). In terms of biological role, component of the dark-operative protochlorophyllide reductase (DPOR) that uses Mg-ATP and reduced ferredoxin to reduce ring D of protochlorophyllide (Pchlide) to form chlorophyllide a (Chlide). This reaction is light-independent. The L component serves as a unique electron donor to the NB-component of the complex, and binds Mg-ATP. The protein is Light-independent protochlorophyllide reductase iron-sulfur ATP-binding protein of Cereibacter sphaeroides (strain ATCC 17025 / ATH 2.4.3) (Rhodobacter sphaeroides).